Reading from the N-terminus, the 354-residue chain is Polyprenal reductase 1 (354 aa).

The next 6 helical transmembrane spans lie at 11–31 (PLLCLAWIATTLPIIVAALPI), 78–98 (FMHFYVVGVLATTILLLAIWF), 141–158 (YHVWRTVFVLLLMEIQVL), 176–196 (MHIVGYLTGLFYYVAAPLSLA), 235–255 (PLLKLGWTQWIGAVIFIWGSL), and 301–321 (GMLVASGGEDIPVWFLFVFVI).

This sequence belongs to the steroid 5-alpha reductase family. Polyprenal reductase subfamily.

Its subcellular location is the cell membrane. It catalyses the reaction a di-trans,poly-cis-dolichal + NADP(+) = a di-trans,poly-cis-polyprenal + NADPH + H(+). It functions in the pathway protein modification; protein glycosylation. Plays a key role in early steps of protein N-linked glycosylation by being involved in the conversion of polyprenol into dolichol. Acts as a polyprenal reductase that mediates the reduction of polyprenal into dolichal in a NADP-dependent mechanism. Dolichols are required for the synthesis of dolichol-linked monosaccharides and the oligosaccharide precursor used for N-glycosylation. This Oryza sativa subsp. indica (Rice) protein is Polyprenal reductase 1.